The chain runs to 317 residues: Melanocyte-stimulating hormone receptor (317 aa).

Over Met1–Glu37 the chain is Extracellular. N-linked (GlcNAc...) asparagine glycosylation occurs at Asn29. Residues Val38–Ile63 form a helical membrane-spanning segment. At Ala64–Pro72 the chain is on the cytoplasmic side. The helical transmembrane segment at Met73–Leu93 threads the bilayer. At Glu94–Asn118 the chain is on the extracellular side. Residues Val119–Val140 form a helical membrane-spanning segment. At Asp141 to Arg163 the chain is on the cytoplasmic side. A helical membrane pass occupies residues Ala164–Tyr183. The Extracellular segment spans residues Asp184–Cys191. A helical membrane pass occupies residues Leu192–Leu211. The Cytoplasmic segment spans residues Val212 to Ala240. The chain crosses the membrane as a helical span at residues Ala241–Leu266. Over Cys267–Asn279 the chain is Extracellular. The chain crosses the membrane as a helical span at residues Phe280–Phe300. The Cytoplasmic segment spans residues Arg301 to Trp317. Cys315 carries S-palmitoyl cysteine lipidation.

This sequence belongs to the G-protein coupled receptor 1 family. Interacts with MGRN1, but does not undergo MGRN1-mediated ubiquitination; this interaction competes with GNAS-binding and thus inhibits agonist-induced cAMP production. Interacts with OPN3; the interaction results in a decrease in MC1R-mediated cAMP signaling and ultimately a decrease in melanin production in melanocytes.

The protein localises to the cell membrane. Functionally, receptor for MSH (alpha, beta and gamma) and ACTH. The activity of this receptor is mediated by G proteins which activate adenylate cyclase. Mediates melanogenesis, the production of eumelanin (black/brown) and phaeomelanin (red/yellow), via regulation of cAMP signaling in melanocytes. This chain is Melanocyte-stimulating hormone receptor (MC1R), found in Cercopithecus diana (Diana monkey).